A 490-amino-acid polypeptide reads, in one-letter code: E3 ubiquitin-protein ligase Hakai (490 aa).

The segment at 34-60 (QANKAKPAPRTQRTINRMPAKAPPGDE) is disordered. The segment at 108-148 (CDKCGLPIKIYGRMIPCKHVFCYDCAILHEKKGDKMCPGCS) adopts an RING-type zinc-finger fold. The interval 147 to 205 (CSDPVQRIEQCTRGSLFMCSIVQGCKRTYLSQRDLQAHINHRHMRAGKPVTRASLENVH) is HYB domain. The C2H2-type zinc finger occupies 163-189 (FMCSIVQGCKRTYLSQRDLQAHINHRH). Residues Ser200, Ser284, and Ser289 each carry the phosphoserine modification. The interval 254–490 (QPHEDIRAPP…DQTRYRPYYQ (237 aa)) is disordered. Pro residues-rich tracts occupy residues 341–358 (APPPPPPPPISHPMPHPP), 371–388 (APPPPMTSAPPPITPPPG), and 398–422 (MNHPPPGPPPPQHGGPPVTAPPPHH). Residues 426-441 (NSLPQFTEDQGTLSPP) show a composition bias toward polar residues. Residues 456–477 (PRGPPPPPRLQGPPSQTPLPGP) show a composition bias toward pro residues.

Belongs to the Hakai family. Homodimer. Interacts with tyrosine-phosphorylated SRC substrates. Component of the WMM complex, a N6-methyltransferase complex composed of a catalytic subcomplex, named MAC, and of an associated subcomplex, named MACOM. The MAC subcomplex is composed of METTL3 and METTL14. The MACOM subcomplex is composed of WTAP, ZC3H13, CBLL1/HAKAI, VIRMA, and, in some cases of RBM15 (RBM15 or RBM15B). Also a component of a MACOM-like complex, named WTAP complex, composed of WTAP, ZC3H13, CBLL1, VIRMA, RBM15, BCLAF1 and THRAP3. Post-translationally, phosphorylated on tyrosine residues.

It localises to the nucleus speckle. It is found in the nucleus. Its subcellular location is the nucleoplasm. The protein localises to the cytoplasm. The enzyme catalyses S-ubiquitinyl-[E2 ubiquitin-conjugating enzyme]-L-cysteine + [acceptor protein]-L-lysine = [E2 ubiquitin-conjugating enzyme]-L-cysteine + N(6)-ubiquitinyl-[acceptor protein]-L-lysine.. It participates in protein modification; protein ubiquitination. E3 ubiquitin-protein ligase that mediates ubiquitination of several tyrosine-phosphorylated Src substrates, including CDH1, CTTN and DOK1. Targets CDH1 for endocytosis and degradation. Associated component of the WMM complex, a complex that mediates N6-methyladenosine (m6A) methylation of RNAs, a modification that plays a role in the efficiency of mRNA splicing and RNA processing. Its function in the WMM complex is unknown. The polypeptide is E3 ubiquitin-protein ligase Hakai (Macaca fascicularis (Crab-eating macaque)).